An 83-amino-acid polypeptide reads, in one-letter code: UPF0297 protein LEUM_0557 (83 aa).

The protein belongs to the UPF0297 family.

The protein is UPF0297 protein LEUM_0557 of Leuconostoc mesenteroides subsp. mesenteroides (strain ATCC 8293 / DSM 20343 / BCRC 11652 / CCM 1803 / JCM 6124 / NCDO 523 / NBRC 100496 / NCIMB 8023 / NCTC 12954 / NRRL B-1118 / 37Y).